Reading from the N-terminus, the 670-residue chain is E3 ubiquitin-protein ligase MAG2 (670 aa).

Disordered regions lie at residues 1–84 (MVEP…TSTR) and 124–145 (EVEREKSRSSSSKKSNRRRDEH). Positions 20-39 (DTLNATSNSSKQGVSNNKRN) are enriched in polar residues. Residues 51 to 66 (SDGRDNAHNYHGEGRR) are compositionally biased toward basic and acidic residues. Residues 195–250 (CSICLSEEPVAPRMVTCGHIFCLSCLLNFFSIEETVKNKETGYSKKKKYKECPLCG) form an RING-type zinc finger. The interval 609–670 (TEDEKASKEN…LFSSNHQALG (62 aa)) is disordered. Positions 610-622 (EDEKASKENKEFQ) are enriched in basic and acidic residues. Low complexity predominate over residues 637-649 (VTDSTDSPPTSNG).

The protein belongs to the RNF10 family.

It localises to the cytoplasm. It carries out the reaction S-ubiquitinyl-[E2 ubiquitin-conjugating enzyme]-L-cysteine + [acceptor protein]-L-lysine = [E2 ubiquitin-conjugating enzyme]-L-cysteine + N(6)-ubiquitinyl-[acceptor protein]-L-lysine.. The protein operates within protein modification; protein ubiquitination. Functionally, E3 ubiquitin-protein ligase involved in the degradation of non-functional 18S rRNAs in response to stalled ribosomes. Catalyzes monoubiquitination of RPS3/uS3 in response to stalled ribosomes, initiating a HEL2-dependent response that activates the degradation of non-functional 18S rRNAs. The sequence is that of E3 ubiquitin-protein ligase MAG2 from Saccharomyces cerevisiae (strain ATCC 204508 / S288c) (Baker's yeast).